A 561-amino-acid polypeptide reads, in one-letter code: Methyl-accepting chemotaxis protein CtpM (561 aa).

The Cytoplasmic portion of the chain corresponds to 1-11 (MMRLTLKSKVL). Residues 12–32 (LLAMVPVLLFALVLSGGAVLI) form a helical membrane-spanning segment. The Periplasmic segment spans residues 33–205 (LKKQADAEVK…KQDIDERIGT (173 aa)). A helical transmembrane segment spans residues 206–226 (LIASIVGIAGVLLVVLLVIGL). Residues 227 to 561 (AVANAMLRPL…LGRLVGQFRI (335 aa)) lie on the Cytoplasmic side of the membrane. The HAMP domain maps to 230-284 (NAMLRPLHQIRQNLDDIAAGEGDLTRRLPVTSYDELGELAGSFNRFVEKIHGLVR). A Methyl-accepting transducer domain is found at 289–525 (MTGDLKQLVE…EINRSVHQIA (237 aa)). A disordered region spans residues 333–357 (HEVAQSAQRAAEAAQQTDHEGQAAK). Residues 336 to 348 (AQSAQRAAEAAQQ) are compositionally biased toward low complexity.

Belongs to the methyl-accepting chemotaxis (MCP) protein family. As to quaternary structure, homodimer. The ligand-binding domain (LBD) is dimeric in the presence and the absence of ligands.

The protein localises to the cell inner membrane. Chemotactic-signal transducers respond to changes in the concentration of attractants and repellents in the environment, transduce a signal from the outside to the inside of the cell, and facilitate sensory adaptation through the variation of the level of methylation. Directly recognizes five C4-dicarboxylic acids: L-malic, citramalic, citraconic, bromosuccinic and methylsuccinic acids. Three of the identified ligands act as chemoattractants (L-malic, D,L-bromosuccinic and L-citramalic acids) whereas two of them (L-methylsuccinic and citraconic acids) behave as antagonists by inhibiting the downstream chemotaxis signaling cascade. Antagonists compete with chemoattractants, thereby decreasing the affinity for chemoattractants and the subsequent chemotactic response. Acts through the che chemosensory pathway. In Pseudomonas aeruginosa (strain ATCC 15692 / DSM 22644 / CIP 104116 / JCM 14847 / LMG 12228 / 1C / PRS 101 / PAO1), this protein is Methyl-accepting chemotaxis protein CtpM.